The chain runs to 564 residues: Serine/threonine-protein kinase PknA (564 aa).

The Protein kinase domain maps to 9–271; that stretch reads YRVIKTLGSG…TAREMLEALQ (263 aa). ATP contacts are provided by residues 15-23 and Lys-40; that span reads LGSGGFGET. Asp-139 serves as the catalytic Proton acceptor. The span at 360 to 406 shows a compositional bias: polar residues; the sequence is QPVTQTTSLPSETTISNNDTPTVEPSPTDTPETPISQTVTQDPTPQA. Residues 360 to 458 are disordered; sequence QPVTQTTSLP…PVEATDRPSP (99 aa). Low complexity predominate over residues 428-445; it reads TTEPTTSVPQPTTPSEPQ.

The protein belongs to the protein kinase superfamily. Ser/Thr protein kinase family.

It catalyses the reaction L-seryl-[protein] + ATP = O-phospho-L-seryl-[protein] + ADP + H(+). The enzyme catalyses L-threonyl-[protein] + ATP = O-phospho-L-threonyl-[protein] + ADP + H(+). Functionally, probably required for both normal cellular growth and differentiation. Inactivation of pknA leads to colonies that appear light green and rough in the absence of combined nitrogen. The polypeptide is Serine/threonine-protein kinase PknA (pknA) (Nostoc sp. (strain PCC 7120 / SAG 25.82 / UTEX 2576)).